The following is a 200-amino-acid chain: Potassium-transporting ATPase KdpC subunit (200 aa).

A helical membrane pass occupies residues 6 to 26 (PAVVLLILLTLITGIAYPLLT).

This sequence belongs to the KdpC family. As to quaternary structure, the system is composed of three essential subunits: KdpA, KdpB and KdpC.

It is found in the cell inner membrane. Functionally, part of the high-affinity ATP-driven potassium transport (or Kdp) system, which catalyzes the hydrolysis of ATP coupled with the electrogenic transport of potassium into the cytoplasm. This subunit acts as a catalytic chaperone that increases the ATP-binding affinity of the ATP-hydrolyzing subunit KdpB by the formation of a transient KdpB/KdpC/ATP ternary complex. The sequence is that of Potassium-transporting ATPase KdpC subunit from Yersinia enterocolitica serotype O:8 / biotype 1B (strain NCTC 13174 / 8081).